Consider the following 61-residue polypeptide: Small ribosomal subunit protein uS14 (61 aa).

Cys24, Cys27, Cys40, and Cys43 together coordinate Zn(2+).

The protein belongs to the universal ribosomal protein uS14 family. Zinc-binding uS14 subfamily. As to quaternary structure, part of the 30S ribosomal subunit. Contacts proteins S3 and S10. Requires Zn(2+) as cofactor.

Binds 16S rRNA, required for the assembly of 30S particles and may also be responsible for determining the conformation of the 16S rRNA at the A site. In Bifidobacterium longum (strain DJO10A), this protein is Small ribosomal subunit protein uS14.